Reading from the N-terminus, the 258-residue chain is Neurotrophin-3 (258 aa).

An N-terminal signal peptide occupies residues Met1–Gly18. Residues Asn19–Arg139 constitute a propeptide that is removed on maturation. The segment at Gln60–Met85 is disordered. The span at Glu67–Arg79 shows a compositional bias: basic and acidic residues. A glycan (N-linked (GlcNAc...) asparagine) is linked at Asn131. 3 cysteine pairs are disulfide-bonded: Cys153–Cys218, Cys196–Cys247, and Cys206–Cys249.

It belongs to the NGF-beta family. As to expression, brain and peripheral tissues.

It is found in the secreted. Functionally, seems to promote the survival of visceral and proprioceptive sensory neurons. This Rattus norvegicus (Rat) protein is Neurotrophin-3 (Ntf3).